Reading from the N-terminus, the 324-residue chain is MNFQPIDGKKLLAWLQPVLSDIKGKITPNVEMRKVTWFRTGGLAELFYQPADEDDLALFFKVLPEFVPVTIVGIGSNLLVRDGGIPGVVIRLSTKSFGQIKQVSSTRFLVGAATADKHLASAALEAEISGFHFYHGIPGGLGGALKMNAGANGVETAERVVEVYALDRKGERHILNLRDMNYAYRHCNIPEGLVFTAALLEGDVGNKDDIRAAMHEVALHRETVQPIREKTGGSTFRNLEDISAWKVIDEAGCRGLQIGGAQMSEMHCNFMINMGEATGYDLEKLGETVRARVFNHSAHHLEWEIQRIGQFEQDRIVLPFDQFH.

Residues 39-220 form the FAD-binding PCMH-type domain; it reads RTGGLAELFY…RAAMHEVALH (182 aa). Arginine 185 is a catalytic residue. The Proton donor role is filled by serine 234. Residue glutamate 304 is part of the active site.

This sequence belongs to the MurB family. The cofactor is FAD.

It is found in the cytoplasm. It carries out the reaction UDP-N-acetyl-alpha-D-muramate + NADP(+) = UDP-N-acetyl-3-O-(1-carboxyvinyl)-alpha-D-glucosamine + NADPH + H(+). It participates in cell wall biogenesis; peptidoglycan biosynthesis. Functionally, cell wall formation. This Bartonella bacilliformis (strain ATCC 35685 / KC583 / Herrer 020/F12,63) protein is UDP-N-acetylenolpyruvoylglucosamine reductase.